Consider the following 318-residue polypeptide: Ribonuclease Z (318 aa).

Zn(2+) is bound by residues His63, His65, Asp67, His68, His142, Asp210, and His268. The active-site Proton acceptor is the Asp67.

Belongs to the RNase Z family. Homodimer. It depends on Zn(2+) as a cofactor.

It catalyses the reaction Endonucleolytic cleavage of RNA, removing extra 3' nucleotides from tRNA precursor, generating 3' termini of tRNAs. A 3'-hydroxy group is left at the tRNA terminus and a 5'-phosphoryl group is left at the trailer molecule.. Its function is as follows. Zinc phosphodiesterase, which displays some tRNA 3'-processing endonuclease activity. Probably involved in tRNA maturation, by removing a 3'-trailer from precursor tRNA. In Thermobifida fusca (strain YX), this protein is Ribonuclease Z.